The chain runs to 368 residues: Proteinase-activated receptor 3 (368 aa).

The first 21 residues, Met1–Cys21, serve as a signal peptide directing secretion. Residues Gln22–Glu37 constitute a propeptide, removed for receptor activation. Residues Ser38–Lys93 are Extracellular-facing. N-linked (GlcNAc...) asparagine glycosylation occurs at Asn80. The helical transmembrane segment at Val94–Leu114 threads the bilayer. Topologically, residues Trp115–Ser123 are cytoplasmic. Residues Ile124–Leu144 traverse the membrane as a helical segment. Residues Pro145–Val166 lie on the Extracellular side of the membrane. An intrachain disulfide couples Cys164 to Cys243. A helical transmembrane segment spans residues Thr167–Ile187. At Asn188 to Thr208 the chain is on the cytoplasmic side. Residues Leu209–Leu229 form a helical membrane-spanning segment. The Extracellular segment spans residues Lys230 to Gln257. Residues Phe258 to Phe278 form a helical membrane-spanning segment. The Cytoplasmic segment spans residues Cys279–Ala300. The chain crosses the membrane as a helical span at residues Val301–Ile321. The Extracellular segment spans residues His322–Tyr338. The helical transmembrane segment at Leu339–Met359 threads the bilayer. Residues Ser360–Ser368 are Cytoplasmic-facing.

The protein belongs to the G-protein coupled receptor 1 family. Interacts with INSC/inscuteable and GPSM2. In terms of processing, a proteolytic cleavage generates a new N-terminus that functions as a tethered ligand.

It localises to the cell membrane. In terms of biological role, receptor for activated thrombin coupled to G proteins that stimulate phosphoinositide hydrolysis. The chain is Proteinase-activated receptor 3 (F2rl2) from Rattus norvegicus (Rat).